The following is a 74-amino-acid chain: Ubiquitin-like protein FUBI (74 aa).

The protein belongs to the ubiquitin family.

The sequence is that of Ubiquitin-like protein FUBI (FAU) from Pongo abelii (Sumatran orangutan).